We begin with the raw amino-acid sequence, 216 residues long: Pathogenicity-related ORF2 (216 aa).

4 consecutive transmembrane segments (helical) span residues 6-26 (VGSLLLVVVIMLGLLPFAAMV), 55-75 (LNGVALLVSCFVMAPVGMEAF), 157-177 (IGFLLYLVFIVIDLVVANALM), and 193-213 (FKLLLFVAMDGWSMLIHGLVL).

The protein belongs to the FliP/MopC/SpaP family.

The protein localises to the cell membrane. Functionally, important for pathogenicity. The sequence is that of Pathogenicity-related ORF2 from Xanthomonas campestris pv. glycines.